The primary structure comprises 325 residues: Tetraacyldisaccharide 4'-kinase (325 aa).

55 to 62 (TAGGNGKT) lines the ATP pocket.

The protein belongs to the LpxK family.

The enzyme catalyses a lipid A disaccharide + ATP = a lipid IVA + ADP + H(+). It functions in the pathway glycolipid biosynthesis; lipid IV(A) biosynthesis; lipid IV(A) from (3R)-3-hydroxytetradecanoyl-[acyl-carrier-protein] and UDP-N-acetyl-alpha-D-glucosamine: step 6/6. Its function is as follows. Transfers the gamma-phosphate of ATP to the 4'-position of a tetraacyldisaccharide 1-phosphate intermediate (termed DS-1-P) to form tetraacyldisaccharide 1,4'-bis-phosphate (lipid IVA). This chain is Tetraacyldisaccharide 4'-kinase, found in Salmonella arizonae (strain ATCC BAA-731 / CDC346-86 / RSK2980).